A 142-amino-acid polypeptide reads, in one-letter code: 3-hydroxyacyl-[acyl-carrier-protein] dehydratase FabZ (142 aa).

Residue H47 is part of the active site.

This sequence belongs to the thioester dehydratase family. FabZ subfamily.

Its subcellular location is the cytoplasm. It catalyses the reaction a (3R)-hydroxyacyl-[ACP] = a (2E)-enoyl-[ACP] + H2O. Its function is as follows. Involved in unsaturated fatty acids biosynthesis. Catalyzes the dehydration of short chain beta-hydroxyacyl-ACPs and long chain saturated and unsaturated beta-hydroxyacyl-ACPs. This Coxiella burnetii (strain RSA 331 / Henzerling II) protein is 3-hydroxyacyl-[acyl-carrier-protein] dehydratase FabZ.